Reading from the N-terminus, the 610-residue chain is Aspartate--tRNA(Asp/Asn) ligase (610 aa).

Glu-177 provides a ligand contact to L-aspartate. An aspartate region spans residues 201-204 (QLFK). Arg-223 serves as a coordination point for L-aspartate. ATP is bound by residues 223 to 225 (RDE) and Gln-232. His-461 provides a ligand contact to L-aspartate. Residue Glu-499 participates in ATP binding. Arg-506 is a binding site for L-aspartate. 551 to 554 (GVDR) serves as a coordination point for ATP.

This sequence belongs to the class-II aminoacyl-tRNA synthetase family. Type 1 subfamily. Homodimer.

The protein localises to the cytoplasm. It carries out the reaction tRNA(Asx) + L-aspartate + ATP = L-aspartyl-tRNA(Asx) + AMP + diphosphate. Aspartyl-tRNA synthetase with relaxed tRNA specificity since it is able to aspartylate not only its cognate tRNA(Asp) but also tRNA(Asn). Reaction proceeds in two steps: L-aspartate is first activated by ATP to form Asp-AMP and then transferred to the acceptor end of tRNA(Asp/Asn). This Parasynechococcus marenigrum (strain WH8102) protein is Aspartate--tRNA(Asp/Asn) ligase.